A 707-amino-acid polypeptide reads, in one-letter code: Casein kinase 1-like protein HD16 (707 aa).

A disordered region spans residues 19–67 (YDVQDADPAASPVSPAPRGRTGRRGGAAAGRGNKTVAEGGGRKALKPRG). The span at 24–37 (ADPAASPVSPAPRG) shows a compositional bias: low complexity. In terms of domain architecture, Protein kinase spans 147 to 425 (YITDRKLGKG…KLISLFDGLI (279 aa)). ATP is bound by residues 153 to 161 (LGKGGFGQV) and Lys184. Asp276 serves as the catalytic Proton acceptor.

Belongs to the protein kinase superfamily. CK1 Ser/Thr protein kinase family. Casein kinase I subfamily. In terms of assembly, monomer. Interacts with GHD7 (via C-terminus). Interacts with SLR1. Autophosphorylated. As to expression, expressed in roots, leaves and stems. Expressed in leaf vascular bundles, and proximal regions of the shoot and roots.

The protein localises to the cytoplasm. It localises to the nucleus. The catalysed reaction is L-seryl-[protein] + ATP = O-phospho-L-seryl-[protein] + ADP + H(+). It carries out the reaction L-threonyl-[protein] + ATP = O-phospho-L-threonyl-[protein] + ADP + H(+). Its function is as follows. Casein kinases are operationally defined by their preferential utilization of acidic proteins such as caseins as substrates. It can phosphorylate a large number of proteins. Can phosphorylate casein on threonine residues in vitro. Involved in the regulation of flowering time through gibberellin (GA) signaling, and independently of photoperiod. Phosphorylates the DELLA protein SLR1, stabilizing SLR1 protein and sustaining SLR1 activity as repressor of GA signaling. Required for normal development of male floral organs and grains, through modulation of GA signaling. Targeted and repressed by the homeobox protein HAZ1 during GA signaling. Can phosphorylate phosvitin and SLR1 in vitro. Is not required for clock function in either the presence or the absence of light signals. Involved in a genetic control pathway for photoperiodic flowering under long day (LD) conditions that includes HD1, GHD7, HD5 and HD2. Phosphorylates and activates GHD7, a major floral repressor under LD conditions. Phosphorylation of GHD7 enhances its function in the repression of EHD1, HD3A and HD3B/RFT1, and obviously delaying flowering. This Oryza sativa subsp. japonica (Rice) protein is Casein kinase 1-like protein HD16.